A 638-amino-acid chain; its full sequence is 1-deoxy-D-xylulose-5-phosphate synthase (638 aa).

Thiamine diphosphate contacts are provided by residues His-72 and 113 to 115; that span reads GHA. Asp-144 lines the Mg(2+) pocket. Thiamine diphosphate is bound by residues 145–146, Asn-174, Tyr-287, and Glu-370; that span reads GA. Asn-174 provides a ligand contact to Mg(2+).

It belongs to the transketolase family. DXPS subfamily. In terms of assembly, homodimer. The cofactor is Mg(2+). Thiamine diphosphate is required as a cofactor.

The catalysed reaction is D-glyceraldehyde 3-phosphate + pyruvate + H(+) = 1-deoxy-D-xylulose 5-phosphate + CO2. Its pathway is metabolic intermediate biosynthesis; 1-deoxy-D-xylulose 5-phosphate biosynthesis; 1-deoxy-D-xylulose 5-phosphate from D-glyceraldehyde 3-phosphate and pyruvate: step 1/1. Catalyzes the acyloin condensation reaction between C atoms 2 and 3 of pyruvate and glyceraldehyde 3-phosphate to yield 1-deoxy-D-xylulose-5-phosphate (DXP). This is 1-deoxy-D-xylulose-5-phosphate synthase from Picosynechococcus sp. (strain ATCC 27264 / PCC 7002 / PR-6) (Agmenellum quadruplicatum).